The primary structure comprises 264 residues: Apolipoprotein A-I (264 aa).

A signal peptide spans 1–18 (MKAVVLAVALVFLTGSQA). Tandem repeats lie at residues 67-88 (LNLL…ERLG) and 89-110 (PLTR…QEMN). The segment at 67 to 264 (LNLLENWDTL…DKASETLTAQ (198 aa)) is 10 X approximate tandem repeats. Met-109 is modified (methionine sulfoxide). Residues 111–121 (KDLEEVKQKVQ) form a 3; half-length repeat. A run of 3 repeats spans residues 122 to 143 (PYLD…QKVA), 144 to 165 (PLGA…GRLS), and 166 to 187 (PVAE…TQLA). The 7; truncated repeat unit spans residues 188–207 (PHSEQMRESLAQRLAELKSN). Met-193 is subject to Methionine sulfoxide. Residues 208-229 (PTLNEYHTRAKTHLKTLGEKAR) form repeat 8. Residues 230 to 240 (PALEDLRHSLM) form a 9; half-length repeat. Methionine sulfoxide occurs at positions 240 and 242. Repeat 10 spans residues 241-264 (PMLETLKTQVQSVIDKASETLTAQ).

It belongs to the apolipoprotein A1/A4/E family. Homodimer. Interacts with APOA1BP and CLU. Component of a sperm activating protein complex (SPAP), consisting of APOA1, an immunoglobulin heavy chain, an immunoglobulin light chain and albumin. Interacts with NDRG1. Interacts with SCGB3A2. Interacts with NAXE and YJEFN3. Glycosylated. Post-translationally, palmitoylated. In terms of processing, may be acylated. Phosphorylation sites are present in the extracellular medium. As to expression, major protein of plasma HDL, also found in chylomicrons.

Its subcellular location is the secreted. Its function is as follows. Participates in the reverse transport of cholesterol from tissues to the liver for excretion by promoting cholesterol efflux from tissues and by acting as a cofactor for the lecithin cholesterol acyltransferase (LCAT). As part of the SPAP complex, activates spermatozoa motility. The chain is Apolipoprotein A-I (Apoa1) from Mus musculus (Mouse).